We begin with the raw amino-acid sequence, 290 residues long: Fructose-1,6-bisphosphatase class 1 (290 aa).

Positions 78, 96, 98, and 99 each coordinate Mg(2+). Substrate-binding positions include 99-102 (DGSS), Y201, and K226. Mg(2+) is bound at residue E232.

The protein belongs to the FBPase class 1 family. In terms of assembly, homotetramer. Mg(2+) serves as cofactor.

The protein localises to the cytoplasm. It carries out the reaction beta-D-fructose 1,6-bisphosphate + H2O = beta-D-fructose 6-phosphate + phosphate. The protein operates within carbohydrate biosynthesis; gluconeogenesis. The sequence is that of Fructose-1,6-bisphosphatase class 1 from Helicobacter acinonychis (strain Sheeba).